The chain runs to 207 residues: Large ribosomal subunit protein uL4 (207 aa).

The segment at 57 to 78 (VAGGGKKPWRQKGTGRARHGSI) is disordered. The span at 63-77 (KPWRQKGTGRARHGS) shows a compositional bias: basic residues.

The protein belongs to the universal ribosomal protein uL4 family. As to quaternary structure, part of the 50S ribosomal subunit.

In terms of biological role, one of the primary rRNA binding proteins, this protein initially binds near the 5'-end of the 23S rRNA. It is important during the early stages of 50S assembly. It makes multiple contacts with different domains of the 23S rRNA in the assembled 50S subunit and ribosome. Its function is as follows. Forms part of the polypeptide exit tunnel. The chain is Large ribosomal subunit protein uL4 from Onion yellows phytoplasma (strain OY-M).